The following is a 398-amino-acid chain: MEIEEASRESGHVVCGSWIRRPKKVNWVLIAKASKRRGSSVSSPALLNIFSFDPITASLSSSPLATHTLKDSDGDPVAVSVHPGGDYFVCSTSKGGCKLFELVGGATGITILAKELLPLQNAGLQKCMAFSFDGSKLAVGGVDGCLRIMEWPNLSVILDEPKAHKSIRDMDFSLDSEFLATTSTDGSARIWKAEDGFPLSTLERSGDENIELCRFSKDGTKPFLFCAAQRGDTPMVNVYDISTWKKLGFKKLSRKTASTMAVSLDGKYIALGGKDGDVSVAEVKTMEIYHYSKRLHLGQSIASLEFCPSERVMLTTSSEWGEMVTKLTVPKEWKEWQIYALLFCLFMASVIAAYVFFENSDSFWKLPMGKDQKRPKISLFGGSSSTPSEDHSRWNLDL.

Methionine 1 carries the N-acetylmethionine modification. Topologically, residues 1-337 (MEIEEASRES…TVPKEWKEWQ (337 aa)) are cytoplasmic. 5 WD repeats span residues 71–110 (DSDG…TGIT), 120–159 (QNAG…VILD), 162–201 (KAHK…PLST), 252–291 (LSRK…IYHY), and 296–334 (HLGQ…KEWK). A helical transmembrane segment spans residues 338–358 (IYALLFCLFMASVIAAYVFFE). At 359–398 (NSDSFWKLPMGKDQKRPKISLFGGSSSTPSEDHSRWNLDL) the chain is on the lumenal side.

As to expression, ubiquitous with higher levels in flowers, roots and senescing leaves.

The protein localises to the endoplasmic reticulum membrane. Involved in Pi uptake by facilitating the trafficking of PHT1-1/PHT1;1 from the endoplasmic reticulum to the plasma membrane. The polypeptide is SEC12-like protein 1 (PHF1) (Arabidopsis thaliana (Mouse-ear cress)).